Reading from the N-terminus, the 1676-residue chain is Anucleate primary sterigmata protein A (1676 aa).

Over residues 1 to 11 the composition is skewed to polar residues; the sequence is MEDSQRGNASM. Residues 1 to 35 form a disordered region; it reads MEDSQRGNASMMSMMDDPFVVSPEGARDPPSTNQY. A coiled-coil region spans residues 51-127; it reads AQAKRALEAH…EIGQETARAF (77 aa). Disordered stretches follow at residues 160–180, 353–394, 439–712, 1027–1050, 1176–1201, 1220–1270, and 1297–1354; these read QATN…NQSN, RLRQ…TPRH, DEVE…SRRP, GTST…PVEP, PLGA…DQGA, VRPL…QASS, and PASA…RRSS. Positions 163-172 are enriched in low complexity; sequence NSPSKVSVPS. Coiled coils occupy residues 193–359 and 408–453; these read TSLL…QQEA and HAHR…AANG. 5 stretches are compositionally biased toward basic and acidic residues: residues 355-370, 439-448, 461-470, 479-489, and 503-522; these read RQQE…RPHD, DEVEQRRRDS, TKAETRKPAR, KKAEVEIHDSD, and ASND…RSDA. Residues 593–602 show a composition bias toward low complexity; sequence SYYSTASTSA. Polar residues predominate over residues 609–620; that stretch reads DPGTPSISQFST. Residues 623–636 show a composition bias toward basic residues; the sequence is YRLRKKRSVLRKIR. The span at 647–664 shows a compositional bias: polar residues; it reads SRPSSARESPSTSFTRDT. The segment covering 678 to 687 has biased composition (acidic residues); that stretch reads AEVDGDEDDF. The span at 1032-1042 shows a compositional bias: low complexity; the sequence is TVEFSVSSISS. A compositionally biased stretch (polar residues) spans 1191 to 1201; it reads SGSSNQADQGA. The span at 1314–1341 shows a compositional bias: polar residues; that stretch reads RASSQQRPRTPNESALQVGSAKTTTSRA. Positions 1393 to 1504 constitute a PH domain; it reads QTMIGEFLWK…WFNALSYLLV (112 aa). Residues 1511–1524 show a composition bias toward acidic residues; it reads EEAENGVTLDDIDE. 2 disordered regions span residues 1511–1589 and 1654–1676; these read EEAE…QASS and HDVS…HSHH. Composition is skewed to polar residues over residues 1534 to 1548 and 1580 to 1589; these read RQTA…QSRG and YSDQARQASS.

It localises to the membrane. In terms of biological role, required for nuclear positioning and completion of asexual development. The polypeptide is Anucleate primary sterigmata protein A (apsA) (Emericella nidulans (strain FGSC A4 / ATCC 38163 / CBS 112.46 / NRRL 194 / M139) (Aspergillus nidulans)).